A 393-amino-acid polypeptide reads, in one-letter code: Putative B3 domain-containing protein Os06g0632500 (393 aa).

DNA-binding regions (TF-B3) lie at residues 27–123, 141–238, and 316–393; these read LSVP…FDPG, RPRF…FLQN, and NSFT…VQRR.

The protein localises to the nucleus. The protein is Putative B3 domain-containing protein Os06g0632500 of Oryza sativa subsp. japonica (Rice).